Here is a 212-residue protein sequence, read N- to C-terminus: ATP phosphoribosyltransferase (212 aa).

The protein belongs to the ATP phosphoribosyltransferase family. Short subfamily. As to quaternary structure, heteromultimer composed of HisG and HisZ subunits.

The protein localises to the cytoplasm. The enzyme catalyses 1-(5-phospho-beta-D-ribosyl)-ATP + diphosphate = 5-phospho-alpha-D-ribose 1-diphosphate + ATP. The protein operates within amino-acid biosynthesis; L-histidine biosynthesis; L-histidine from 5-phospho-alpha-D-ribose 1-diphosphate: step 1/9. In terms of biological role, catalyzes the condensation of ATP and 5-phosphoribose 1-diphosphate to form N'-(5'-phosphoribosyl)-ATP (PR-ATP). Has a crucial role in the pathway because the rate of histidine biosynthesis seems to be controlled primarily by regulation of HisG enzymatic activity. This Clostridium botulinum (strain ATCC 19397 / Type A) protein is ATP phosphoribosyltransferase.